A 115-amino-acid chain; its full sequence is Large ribosomal subunit protein uL22 (115 aa).

It belongs to the universal ribosomal protein uL22 family. In terms of assembly, part of the 50S ribosomal subunit.

In terms of biological role, this protein binds specifically to 23S rRNA; its binding is stimulated by other ribosomal proteins, e.g. L4, L17, and L20. It is important during the early stages of 50S assembly. It makes multiple contacts with different domains of the 23S rRNA in the assembled 50S subunit and ribosome. Functionally, the globular domain of the protein is located near the polypeptide exit tunnel on the outside of the subunit, while an extended beta-hairpin is found that lines the wall of the exit tunnel in the center of the 70S ribosome. The chain is Large ribosomal subunit protein uL22 from Coxiella burnetii (strain CbuG_Q212) (Coxiella burnetii (strain Q212)).